The primary structure comprises 438 residues: V-type ATP synthase beta chain (438 aa).

The protein belongs to the ATPase alpha/beta chains family.

Produces ATP from ADP in the presence of a proton gradient across the membrane. The V-type beta chain is a regulatory subunit. The sequence is that of V-type ATP synthase beta chain from Chlamydia felis (strain Fe/C-56) (Chlamydophila felis).